A 96-amino-acid chain; its full sequence is Large ribosomal subunit protein bL21 (96 aa).

Residues 73–84 (KRRKRYQSRNGH) are compositionally biased toward basic residues. The interval 73–96 (KRRKRYQSRNGHRQQMTQIEVVSL) is disordered. Polar residues predominate over residues 85-96 (RQQMTQIEVVSL).

This sequence belongs to the bacterial ribosomal protein bL21 family. As to quaternary structure, part of the 50S ribosomal subunit. Contacts protein L20.

In terms of biological role, this protein binds to 23S rRNA in the presence of protein L20. The protein is Large ribosomal subunit protein bL21 of Chlorobium phaeovibrioides (strain DSM 265 / 1930) (Prosthecochloris vibrioformis (strain DSM 265)).